The primary structure comprises 96 residues: Putative pterin-4-alpha-carbinolamine dehydratase (96 aa).

The protein belongs to the pterin-4-alpha-carbinolamine dehydratase family.

The enzyme catalyses (4aS,6R)-4a-hydroxy-L-erythro-5,6,7,8-tetrahydrobiopterin = (6R)-L-erythro-6,7-dihydrobiopterin + H2O. The chain is Putative pterin-4-alpha-carbinolamine dehydratase from Paraburkholderia phytofirmans (strain DSM 17436 / LMG 22146 / PsJN) (Burkholderia phytofirmans).